Reading from the N-terminus, the 216-residue chain is Uracil phosphoribosyltransferase (216 aa).

Residues Arg85, Arg110, and 135-143 contribute to the 5-phospho-alpha-D-ribose 1-diphosphate site; that span reads DPMVATGYS. Uracil contacts are provided by residues Ile200 and 205–207; that span reads GDA. Asp206 is a 5-phospho-alpha-D-ribose 1-diphosphate binding site.

It belongs to the UPRTase family. It depends on Mg(2+) as a cofactor.

It catalyses the reaction UMP + diphosphate = 5-phospho-alpha-D-ribose 1-diphosphate + uracil. The protein operates within pyrimidine metabolism; UMP biosynthesis via salvage pathway; UMP from uracil: step 1/1. Its activity is regulated as follows. Allosterically activated by GTP. Functionally, catalyzes the conversion of uracil and 5-phospho-alpha-D-ribose 1-diphosphate (PRPP) to UMP and diphosphate. This is Uracil phosphoribosyltransferase from Burkholderia pseudomallei (strain 668).